The following is a 42-amino-acid chain: MSNTGTTGRIPLWLVGTVVGLLAIGLLALFFYGSYSGLGSSL.

A helical membrane pass occupies residues 10 to 30 (IPLWLVGTVVGLLAIGLLALF).

It belongs to the PsbJ family. As to quaternary structure, PSII is composed of 1 copy each of membrane proteins PsbA, PsbB, PsbC, PsbD, PsbE, PsbF, PsbH, PsbI, PsbJ, PsbK, PsbL, PsbM, PsbT, PsbX, PsbY, PsbZ, Psb30/Ycf12, at least 3 peripheral proteins of the oxygen-evolving complex and a large number of cofactors. It forms dimeric complexes.

It is found in the plastid. It localises to the chloroplast thylakoid membrane. In terms of biological role, one of the components of the core complex of photosystem II (PSII). PSII is a light-driven water:plastoquinone oxidoreductase that uses light energy to abstract electrons from H(2)O, generating O(2) and a proton gradient subsequently used for ATP formation. It consists of a core antenna complex that captures photons, and an electron transfer chain that converts photonic excitation into a charge separation. This is Photosystem II reaction center protein J from Mesostigma viride (Green alga).